A 568-amino-acid polypeptide reads, in one-letter code: Oxygen-dependent choline dehydrogenase (568 aa).

8-37 contacts FAD; the sequence is DYIIIGAGSAGNTLAARLTEDAGVTVLLLE. Histidine 477 serves as the catalytic Proton acceptor.

It belongs to the GMC oxidoreductase family. The cofactor is FAD.

It catalyses the reaction choline + A = betaine aldehyde + AH2. The enzyme catalyses betaine aldehyde + NAD(+) + H2O = glycine betaine + NADH + 2 H(+). Its pathway is amine and polyamine biosynthesis; betaine biosynthesis via choline pathway; betaine aldehyde from choline (cytochrome c reductase route): step 1/1. In terms of biological role, involved in the biosynthesis of the osmoprotectant glycine betaine. Catalyzes the oxidation of choline to betaine aldehyde and betaine aldehyde to glycine betaine at the same rate. In Pseudomonas syringae pv. tomato (strain ATCC BAA-871 / DC3000), this protein is Oxygen-dependent choline dehydrogenase.